Here is a 537-residue protein sequence, read N- to C-terminus: Formimidoyltransferase-cyclodeaminase (537 aa).

The formiminotransferase N-subdomain stretch occupies residues 1-181 (MNKLVECVPN…GASVTGARSF (181 aa)). Histidine 82 (for formimidoyltransferase activity) is an active-site residue. Position 163–172 (163–172 (GPAKFIPSYG)) interacts with folate. The tract at residues 182–326 (LIAYNVNILG…PKKRIIDYMV (145 aa)) is formiminotransferase C-subdomain. The segment at 327-335 (QEDLKVTQP) is linker. The cyclodeaminase/cyclohydrolase stretch occupies residues 336 to 537 (LASMSVRGFV…VLEILSNRKE (202 aa)). Catalysis depends on aspartate 413, which acts as the For cyclodeaminase activity.

It in the C-terminal section; belongs to the cyclodeaminase/cyclohydrolase family. In the N-terminal section; belongs to the formiminotransferase family. As to quaternary structure, homooctamer, including four polyglutamate binding sites. The subunits are arranged as a tetramer of dimers, and form a planar ring-shaped structure.

The protein localises to the cytoplasm. It is found in the cytosol. Its subcellular location is the golgi apparatus. It localises to the cytoskeleton. The protein resides in the microtubule organizing center. The protein localises to the centrosome. It is found in the centriole. The enzyme catalyses 5-formimidoyltetrahydrofolate + L-glutamate = N-formimidoyl-L-glutamate + (6S)-5,6,7,8-tetrahydrofolate. It catalyses the reaction 5-formimidoyltetrahydrofolate + 2 H(+) = (6R)-5,10-methenyltetrahydrofolate + NH4(+). It functions in the pathway amino-acid degradation; L-histidine degradation into L-glutamate; L-glutamate from N-formimidoyl-L-glutamate (transferase route): step 1/1. In terms of biological role, folate-dependent enzyme, that displays both transferase and deaminase activity. Serves to channel one-carbon units from formiminoglutamate to the folate pool. The protein is Formimidoyltransferase-cyclodeaminase (ftcd) of Dictyostelium discoideum (Social amoeba).